The primary structure comprises 875 residues: ATP-dependent helicase Lhr-Core (875 aa).

ATP is bound by residues Gln35, Lys58, Thr59, Asp173, Glu174, Ile355, Arg372, and His375. The region spanning 39-230 (IPLIKQNYNV…FLVGKDREYR (192 aa)) is the Helicase ATP-binding domain. Residues 173-176 (DEIH) carry the DEIH box motif. The region spanning 247 to 419 (PVKDLVHSSE…SIHIPKNPLD (173 aa)) is the Helicase C-terminal domain. Residues 420-506 (VLSQIIVSAS…IFYTNSGTIP (87 aa)) are WH domain. The domain 4 stretch occupies residues 507-875 (DEAMISVVTE…VNIELEYTSV (369 aa)).

It belongs to the Lhr helicase family. Lhr-Core subfamily. Monomer and homodimer. The monomeric form has helicase, ATPase and strand annealing activities, while the dimeric form only has ATPAse and strand annealing activities. Interacts with DNA topoisomerase 3 (topA).

It carries out the reaction Couples ATP hydrolysis with the unwinding of duplex DNA by translocating in the 3'-5' direction.. It catalyses the reaction ATP + H2O = ADP + phosphate + H(+). DNA topoisomerase 3 (topA) inhibits helicase activity on Holliday junctions (HJ) but has no effect on ATPase activity. Functionally, DNA helicase that translocates in a 3'-5' direction on single-stranded (ss)DNA, probably involved in DNA repair. Unwinds DNA in a 3'-5' direction, unwinding is ATP-dependent, acts preferentially on fork and 3'-tailed DNA; bubble and blunt-ended double-stranded (ds)DNA are not substrates. Has winding and unwinding activity, unwinds Holliday junction (HJ) DNA in the presence of ATP, the main product is forked DNA, single-stranded binding protein (SSB) does not stimulate activity. Anneals complementary oligonucleotides in an ATP-independent manner to form HJ and fork structures, thus can perform strand exchange. Preferentially binds HJ, forked and ssDNA, dsDNA is bound less well. LhrC-Core (Hel112) inhibits the exonuclease activity of the HerA-NurA complex on ss- and dsDNA, has no effect on ssDNA nicking by NurA; HerA-NurA are involved in DNA end-resection during DNA double-strand break repair. This chain is ATP-dependent helicase Lhr-Core, found in Saccharolobus solfataricus (strain ATCC 35092 / DSM 1617 / JCM 11322 / P2) (Sulfolobus solfataricus).